The primary structure comprises 444 residues: N-succinylarginine dihydrolase (444 aa).

Residues Ala19–Ser28, Asn110, and His137–Arg138 each bind substrate. The active site involves Glu174. Arg214 contributes to the substrate binding site. The active site involves His250. 2 residues coordinate substrate: Asp252 and Asn362. The active-site Nucleophile is Cys368.

The protein belongs to the succinylarginine dihydrolase family. As to quaternary structure, homodimer.

It catalyses the reaction N(2)-succinyl-L-arginine + 2 H2O + 2 H(+) = N(2)-succinyl-L-ornithine + 2 NH4(+) + CO2. Its pathway is amino-acid degradation; L-arginine degradation via AST pathway; L-glutamate and succinate from L-arginine: step 2/5. Its function is as follows. Catalyzes the hydrolysis of N(2)-succinylarginine into N(2)-succinylornithine, ammonia and CO(2). This chain is N-succinylarginine dihydrolase, found in Shewanella sp. (strain ANA-3).